The following is a 334-amino-acid chain: Photosystem II assembly protein Ycf48 (334 aa).

The N-terminal stretch at 1 to 22 (MAKMLKLWRLVLLAAFSLLLMA) is a signal peptide.

The protein belongs to the Ycf48 family. As to quaternary structure, part of early PSII assembly complexes which includes D1 (psbA) and PsbI; not found in mature PSII. Binds to the lumenal side of PSII complexes. Interacts with YidC.

It is found in the cellular thylakoid lumen. Its function is as follows. A factor required for optimal assembly of photosystem II (PSII), acting in the early stages of PSII assembly. Also plays a role in replacement of photodamaged D1 (psbA). Assists YidC in synthesis of chlorophyll-binding proteins. In Synechococcus sp. (strain JA-3-3Ab) (Cyanobacteria bacterium Yellowstone A-Prime), this protein is Photosystem II assembly protein Ycf48.